The following is a 378-amino-acid chain: Alpha-D-ribose 1-methylphosphonate 5-triphosphate diphosphatase (378 aa).

The protein belongs to the metallo-dependent hydrolases superfamily.

The enzyme catalyses alpha-D-ribose 1-methylphosphonate 5-triphosphate + H2O = alpha-D-ribose 1-methylphosphonate 5-phosphate + diphosphate + H(+). In terms of biological role, catalyzes the hydrolysis of alpha-D-ribose 1-methylphosphonate triphosphate (RPnTP) to form alpha-D-ribose 1-methylphosphonate phosphate (PRPn) and diphosphate. This Escherichia coli (strain K12) protein is Alpha-D-ribose 1-methylphosphonate 5-triphosphate diphosphatase (phnM).